The following is a 146-amino-acid chain: Protein archease (146 aa).

Ca(2+)-binding residues include D16, D145, and I146.

It belongs to the archease family.

In terms of biological role, activates the tRNA-splicing ligase complex by facilitating the enzymatic turnover of catalytic subunit RtcB. Acts by promoting the guanylylation of RtcB, a key intermediate step in tRNA ligation. Can also alter the NTP specificity of RtcB such that ATP, dGTP or ITP is used efficiently. This is Protein archease from Methanosarcina acetivorans (strain ATCC 35395 / DSM 2834 / JCM 12185 / C2A).